Consider the following 373-residue polypeptide: Dual-specificity RNA methyltransferase RlmN (373 aa).

Glu94 acts as the Proton acceptor in catalysis. Residues 100-339 form the Radical SAM core domain; the sequence is EDDRATLCVS…VIVRKTRGDD (240 aa). Cys107 and Cys344 form a disulfide bridge. [4Fe-4S] cluster-binding residues include Cys114, Cys118, and Cys121. S-adenosyl-L-methionine is bound by residues 168-169, Ser200, 222-224, and Asn301; these read GE and SIH. The S-methylcysteine intermediate role is filled by Cys344.

Belongs to the radical SAM superfamily. RlmN family. Requires [4Fe-4S] cluster as cofactor.

The protein localises to the cytoplasm. The enzyme catalyses adenosine(2503) in 23S rRNA + 2 reduced [2Fe-2S]-[ferredoxin] + 2 S-adenosyl-L-methionine = 2-methyladenosine(2503) in 23S rRNA + 5'-deoxyadenosine + L-methionine + 2 oxidized [2Fe-2S]-[ferredoxin] + S-adenosyl-L-homocysteine. It catalyses the reaction adenosine(37) in tRNA + 2 reduced [2Fe-2S]-[ferredoxin] + 2 S-adenosyl-L-methionine = 2-methyladenosine(37) in tRNA + 5'-deoxyadenosine + L-methionine + 2 oxidized [2Fe-2S]-[ferredoxin] + S-adenosyl-L-homocysteine. Its function is as follows. Specifically methylates position 2 of adenine 2503 in 23S rRNA and position 2 of adenine 37 in tRNAs. m2A2503 modification seems to play a crucial role in the proofreading step occurring at the peptidyl transferase center and thus would serve to optimize ribosomal fidelity. The protein is Dual-specificity RNA methyltransferase RlmN of Shewanella amazonensis (strain ATCC BAA-1098 / SB2B).